A 278-amino-acid chain; its full sequence is Extracellular metalloprotease MCYG_03238 (278 aa).

The signal sequence occupies residues Met-1–Ala-19. Asn-52 carries N-linked (GlcNAc...) asparagine glycosylation. Zn(2+) is bound at residue His-170. The active site involves Glu-171. Residue His-174 participates in Zn(2+) binding. A disulfide bridge links Cys-209 with Cys-255.

Belongs to the peptidase M43B family.

The protein localises to the secreted. Functionally, secreted metalloproteinase that allows assimilation of proteinaceous substrates. Plays a pivotal role as a pathogenicity determinant during infections and contributes to the ability of the pathogen to persist within the mammalian host. In Arthroderma otae (strain ATCC MYA-4605 / CBS 113480) (Microsporum canis), this protein is Extracellular metalloprotease MCYG_03238.